A 626-amino-acid chain; its full sequence is Serine/threonine-protein kinase PknH (626 aa).

The Cytoplasmic portion of the chain corresponds to 1 to 403 (MSDAQDSRVG…QTPRKTNPWP (403 aa)). The Protein kinase domain occupies 16 to 276 (YHLKRLLGRG…DLALAAHEAL (261 aa)). ATP contacts are provided by residues 22-30 (LGRGGMGEV) and Lys45. Catalysis depends on Asp139, which acts as the Proton acceptor. Thr170 bears the Phosphothreonine mark. The interval 292-396 (QESTLPAPPK…GGPSPWAQTP (105 aa)) is disordered. 2 stretches are compositionally biased toward pro residues: residues 297–308 (PAPPKPVPPPTM) and 316–342 (RQPP…PAQP). A compositionally biased stretch (low complexity) spans 343–355 (GPAGQRPGPTGQP). Residues 404–424 (LVAGAAAVVLVLVLGAIGIWI) traverse the membrane as a helical segment. Over 425–626 (AIRPKPVQPP…AKIVDKVNKE (202 aa)) the chain is Extracellular. Disulfide bonds link Cys482/Cys545 and Cys587/Cys604.

This sequence belongs to the protein kinase superfamily. Ser/Thr protein kinase family. The cofactor is a divalent metal cation. Post-translationally, autophosphorylated on threonine and serine residues. Dephosphorylated by PstP.

Its subcellular location is the cell membrane. The enzyme catalyses L-seryl-[protein] + ATP = O-phospho-L-seryl-[protein] + ADP + H(+). It carries out the reaction L-threonyl-[protein] + ATP = O-phospho-L-threonyl-[protein] + ADP + H(+). In terms of biological role, may regulate bacterial growth in response to external signals to facilitate adaptation to the host environment. The chain is Serine/threonine-protein kinase PknH (pknH) from Mycobacterium tuberculosis (strain CDC 1551 / Oshkosh).